We begin with the raw amino-acid sequence, 391 residues long: L-tryptophan--pyruvate aminotransferase 1 (391 aa).

Residues Y58, 100-101 (ST), N168, 191-194 (DFAY), 214-217 (TFSK), and R225 contribute to the pyridoxal 5'-phosphate site. Position 217 is an N6-(pyridoxal phosphate)lysine (K217).

This sequence belongs to the alliinase family. Pyridoxal 5'-phosphate is required as a cofactor. In terms of tissue distribution, expressed at the leaf margin and in the vasculature of emerging young leaves. Expressed in the quiescent center and in the vasculature of root tips. Detected in the shoot apical meristem, stems, sepals, stamen filaments, the shoot and root junction, the stigma and the base of the silique.

The protein resides in the cytoplasm. It catalyses the reaction L-tryptophan + 2-oxoglutarate = indole-3-pyruvate + L-glutamate. The enzyme catalyses L-tryptophan + pyruvate = indole-3-pyruvate + L-alanine. The protein operates within plant hormone metabolism; auxin biosynthesis. Its activity is regulated as follows. Inhibited by L-kynurenine. Its function is as follows. L-tryptophan aminotransferase involved in auxin (IAA) biosynthesis. Can convert L-tryptophan and pyruvate to indole-3-pyruvic acid (IPA) and alanine. Catalyzes the first step in IPA branch of the auxin biosynthetic pathway. Required for auxin production to initiate multiple change in growth in response to environmental and developmental cues. It is also active with phenylalanine, tyrosine, leucine, alanine, methionine and glutamine. Both TAA1 and TAR2 are required for maintaining proper auxin levels in roots, while TAA1, TAR1 and TAR2 are required for proper embryo patterning. Involved in the maintenance of the root stem cell niches and required for shade avoidance. This is L-tryptophan--pyruvate aminotransferase 1 (TAA1) from Arabidopsis thaliana (Mouse-ear cress).